The sequence spans 101 residues: uncharacterized protein (101 aa).

A signal peptide spans 1–25 (MISIPFRSTMSRTLVFIILPTVLSC).

This is an uncharacterized protein from Saccharomyces cerevisiae (strain ATCC 204508 / S288c) (Baker's yeast).